The following is a 239-amino-acid chain: Gag polyprotein (239 aa).

Positions 124-141 are enriched in basic and acidic residues; sequence KGEEVGETTAQRDAKMAP. The disordered stretch occupies residues 124-144; it reads KGEEVGETTAQRDAKMAPEKM. Positions 172–175 match the PPXY motif motif; it reads PPPY. The disordered stretch occupies residues 184-214; it reads LAGVGEQQGQGGDTPWGAEQPRAEPGHAGLA.

It localises to the virion. This is Gag polyprotein (ev-1) from Galliformes.